A 59-amino-acid polypeptide reads, in one-letter code: DNA-directed RNA polymerase subunit Rpo6 (59 aa).

It belongs to the archaeal Rpo6/eukaryotic RPB6 RNA polymerase subunit family. In terms of assembly, part of the RNA polymerase complex.

The protein localises to the cytoplasm. The enzyme catalyses RNA(n) + a ribonucleoside 5'-triphosphate = RNA(n+1) + diphosphate. Functionally, DNA-dependent RNA polymerase (RNAP) catalyzes the transcription of DNA into RNA using the four ribonucleoside triphosphates as substrates. The protein is DNA-directed RNA polymerase subunit Rpo6 of Halorubrum lacusprofundi (strain ATCC 49239 / DSM 5036 / JCM 8891 / ACAM 34).